We begin with the raw amino-acid sequence, 254 residues long: 4-hydroxy-tetrahydrodipicolinate reductase (254 aa).

NAD(+) is bound at residue 13 to 18; the sequence is GAAGRM. Position 39 (Arg39) interacts with NADP(+). Residues 86-88 and 110-113 each bind NAD(+); these read GTT and AANT. His143 acts as the Proton donor/acceptor in catalysis. (S)-2,3,4,5-tetrahydrodipicolinate is bound at residue His144. Lys147 acts as the Proton donor in catalysis. 153–154 contacts (S)-2,3,4,5-tetrahydrodipicolinate; that stretch reads GT.

This sequence belongs to the DapB family.

It is found in the cytoplasm. The catalysed reaction is (S)-2,3,4,5-tetrahydrodipicolinate + NAD(+) + H2O = (2S,4S)-4-hydroxy-2,3,4,5-tetrahydrodipicolinate + NADH + H(+). The enzyme catalyses (S)-2,3,4,5-tetrahydrodipicolinate + NADP(+) + H2O = (2S,4S)-4-hydroxy-2,3,4,5-tetrahydrodipicolinate + NADPH + H(+). Its pathway is amino-acid biosynthesis; L-lysine biosynthesis via DAP pathway; (S)-tetrahydrodipicolinate from L-aspartate: step 4/4. Functionally, catalyzes the conversion of 4-hydroxy-tetrahydrodipicolinate (HTPA) to tetrahydrodipicolinate. In Zymomonas mobilis subsp. mobilis (strain ATCC 31821 / ZM4 / CP4), this protein is 4-hydroxy-tetrahydrodipicolinate reductase.